The sequence spans 473 residues: Dihydrolipoyl dehydrogenase (473 aa).

Residues 36 to 45 (ERYDKLGGVC), lysine 54, and alanine 117 each bind FAD. The cysteines at positions 45 and 50 are disulfide-linked. NAD(+) contacts are provided by residues 182-186 (GSGII), aspartate 205, and 270-273 (AIGR). FAD is bound by residues aspartate 313 and alanine 321. The Proton acceptor role is filled by histidine 445.

Belongs to the class-I pyridine nucleotide-disulfide oxidoreductase family. In terms of assembly, homodimer. The cofactor is FAD.

The protein resides in the cytoplasm. It catalyses the reaction N(6)-[(R)-dihydrolipoyl]-L-lysyl-[protein] + NAD(+) = N(6)-[(R)-lipoyl]-L-lysyl-[protein] + NADH + H(+). Functionally, lipoamide dehydrogenase is a component of the alpha-ketoacid dehydrogenase complexes. The protein is Dihydrolipoyl dehydrogenase (lpdA) of Buchnera aphidicola subsp. Acyrthosiphon pisum (strain APS) (Acyrthosiphon pisum symbiotic bacterium).